The primary structure comprises 124 residues: Superoxide reductase (124 aa).

6 residues coordinate Fe cation: E14, H16, H41, H47, C111, and H114.

This sequence belongs to the desulfoferrodoxin family. As to quaternary structure, homotetramer. Requires Fe cation as cofactor.

The enzyme catalyses reduced [rubredoxin] + superoxide + 2 H(+) = oxidized [rubredoxin] + H2O2. In terms of biological role, uses electrons from reduced NADP, by way of rubredoxin and an oxidoreductase, to catalyze the reduction of superoxide to hydrogen peroxide. In Pyrococcus furiosus (strain ATCC 43587 / DSM 3638 / JCM 8422 / Vc1), this protein is Superoxide reductase (sorA).